Consider the following 338-residue polypeptide: RNA 3'-terminal phosphate cyclase (338 aa).

ATP-binding positions include Q103 and 283 to 287 (YLADQ). Catalysis depends on H308, which acts as the Tele-AMP-histidine intermediate.

It belongs to the RNA 3'-terminal cyclase family. Type 1 subfamily.

The protein localises to the cytoplasm. It carries out the reaction a 3'-end 3'-phospho-ribonucleotide-RNA + ATP = a 3'-end 2',3'-cyclophospho-ribonucleotide-RNA + AMP + diphosphate. In terms of biological role, catalyzes the conversion of 3'-phosphate to a 2',3'-cyclic phosphodiester at the end of RNA. The mechanism of action of the enzyme occurs in 3 steps: (A) adenylation of the enzyme by ATP; (B) transfer of adenylate to an RNA-N3'P to produce RNA-N3'PP5'A; (C) and attack of the adjacent 2'-hydroxyl on the 3'-phosphorus in the diester linkage to produce the cyclic end product. The biological role of this enzyme is unknown but it is likely to function in some aspects of cellular RNA processing. This Escherichia coli O7:K1 (strain IAI39 / ExPEC) protein is RNA 3'-terminal phosphate cyclase.